The sequence spans 405 residues: Aspartic protease (405 aa).

Positions 1–21 (MISDTVIAILAVALVGSTVQA) are cleaved as a signal peptide. A propeptide spans 22-81 (APVDATATSTSGIIAVPISKSAAQLAREADPVVSLDWLKKTKAQAQYKHKQANARLHSKR) (removed in mature form). Residues 97 to 402 (WTGPITIGGQ…DVGNARVGFA (306 aa)) form the Peptidase A1 domain. Asp113 is a catalytic residue. The cysteines at positions 126 and 131 are disulfide-linked. Asp290 is a catalytic residue. Cys332 and Cys366 are disulfide-bonded.

Belongs to the peptidase A1 family.

It is found in the secreted. Its activity is regulated as follows. Inhibited by pepstatin A. Possesses acidic protease activity. Hydrolyzes casein and azoalbumin in vitro. The sequence is that of Aspartic protease from Phaffia rhodozyma (Yeast).